The sequence spans 704 residues: Elongation factor G (704 aa).

Residues 10 to 290 enclose the tr-type G domain; sequence NKVRNIGIMA…AVVDFLPSPL (281 aa). GTP contacts are provided by residues 19–26, 83–87, and 137–140; these read AHIDAGKT, DTPGH, and NKMD. Residues 293–313 are disordered; sequence PPMIGHDPRNEETEMTRKPST. The span at 298–313 shows a compositional bias: basic and acidic residues; the sequence is HDPRNEETEMTRKPST.

Belongs to the TRAFAC class translation factor GTPase superfamily. Classic translation factor GTPase family. EF-G/EF-2 subfamily.

It is found in the cytoplasm. Its function is as follows. Catalyzes the GTP-dependent ribosomal translocation step during translation elongation. During this step, the ribosome changes from the pre-translocational (PRE) to the post-translocational (POST) state as the newly formed A-site-bound peptidyl-tRNA and P-site-bound deacylated tRNA move to the P and E sites, respectively. Catalyzes the coordinated movement of the two tRNA molecules, the mRNA and conformational changes in the ribosome. The polypeptide is Elongation factor G (Renibacterium salmoninarum (strain ATCC 33209 / DSM 20767 / JCM 11484 / NBRC 15589 / NCIMB 2235)).